A 160-amino-acid chain; its full sequence is MPSFDVVSEVDMQELRNAVDQTQREIDTRYDFKGTAAAIELNEMELTLFGDAEFQVEQVMDILVQKIAKRGIDVGCLEPGKLEEGGGKARRVVKVLAGIETDTARKIVKLIKEAKLKVQAAIQGDKVRVTGKKRDDLQEVIALLRQADVGLPLQYNNFRD.

Belongs to the YajQ family.

Its function is as follows. Nucleotide-binding protein. The chain is Nucleotide-binding protein Tgr7_1196 from Thioalkalivibrio sulfidiphilus (strain HL-EbGR7).